A 45-amino-acid polypeptide reads, in one-letter code: Photosystem II reaction center protein K (45 aa).

Positions 1-8 (METIYLLA) are excised as a propeptide. A helical membrane pass occupies residues 16-40 (IFDPLVDVLPVIPLFFLALAFVWQA).

It belongs to the PsbK family. PSII is composed of 1 copy each of membrane proteins PsbA, PsbB, PsbC, PsbD, PsbE, PsbF, PsbH, PsbI, PsbJ, PsbK, PsbL, PsbM, PsbT, PsbX, PsbY, PsbZ, Psb30/Ycf12, peripheral proteins PsbO, CyanoQ (PsbQ), PsbU, PsbV and a large number of cofactors. It forms dimeric complexes.

The protein localises to the cellular thylakoid membrane. Its function is as follows. One of the components of the core complex of photosystem II (PSII). PSII is a light-driven water:plastoquinone oxidoreductase that uses light energy to abstract electrons from H(2)O, generating O(2) and a proton gradient subsequently used for ATP formation. It consists of a core antenna complex that captures photons, and an electron transfer chain that converts photonic excitation into a charge separation. The protein is Photosystem II reaction center protein K of Synechocystis sp. (strain ATCC 27184 / PCC 6803 / Kazusa).